The sequence spans 115 residues: Cytochrome c oxidase subunit 3 (115 aa).

Helical transmembrane passes span 32-52 (CLQG…LQGL) and 70-90 (FFLA…FLMI).

It belongs to the cytochrome c oxidase subunit 3 family. In terms of assembly, component of the cytochrome c oxidase (complex IV, CIV), a multisubunit enzyme composed of a catalytic core of 3 subunits and several supernumerary subunits. The complex exists as a monomer or a dimer and forms supercomplexes (SCs) in the inner mitochondrial membrane with ubiquinol-cytochrome c oxidoreductase (cytochrome b-c1 complex, complex III, CIII).

It localises to the mitochondrion inner membrane. It catalyses the reaction 4 Fe(II)-[cytochrome c] + O2 + 8 H(+)(in) = 4 Fe(III)-[cytochrome c] + 2 H2O + 4 H(+)(out). In terms of biological role, component of the cytochrome c oxidase, the last enzyme in the mitochondrial electron transport chain which drives oxidative phosphorylation. The respiratory chain contains 3 multisubunit complexes succinate dehydrogenase (complex II, CII), ubiquinol-cytochrome c oxidoreductase (cytochrome b-c1 complex, complex III, CIII) and cytochrome c oxidase (complex IV, CIV), that cooperate to transfer electrons derived from NADH and succinate to molecular oxygen, creating an electrochemical gradient over the inner membrane that drives transmembrane transport and the ATP synthase. Cytochrome c oxidase is the component of the respiratory chain that catalyzes the reduction of oxygen to water. Electrons originating from reduced cytochrome c in the intermembrane space (IMS) are transferred via the dinuclear copper A center (CU(A)) of subunit 2 and heme A of subunit 1 to the active site in subunit 1, a binuclear center (BNC) formed by heme A3 and copper B (CU(B)). The BNC reduces molecular oxygen to 2 water molecules using 4 electrons from cytochrome c in the IMS and 4 protons from the mitochondrial matrix. The protein is Cytochrome c oxidase subunit 3 (COIII) of Artemia salina (Brine shrimp).